Consider the following 270-residue polypeptide: Sulfur carrier protein FdhD (270 aa).

Residue C116 is the Cysteine persulfide intermediate of the active site. 253-258 (FAREGK) contributes to the Mo-bis(molybdopterin guanine dinucleotide) binding site.

Belongs to the FdhD family.

Its subcellular location is the cytoplasm. In terms of biological role, required for formate dehydrogenase (FDH) activity. Acts as a sulfur carrier protein that transfers sulfur from IscS to the molybdenum cofactor prior to its insertion into FDH. The sequence is that of Sulfur carrier protein FdhD from Haemophilus influenzae (strain 86-028NP).